Here is a 284-residue protein sequence, read N- to C-terminus: Orotidine 5'-phosphate decarboxylase (284 aa).

Substrate-binding positions include Asp-42, 64 to 66, 96 to 105, Tyr-237, and Arg-255; these read KTH and DRKFADIGNT. Lys-98 functions as the Proton donor in the catalytic mechanism.

This sequence belongs to the OMP decarboxylase family.

It catalyses the reaction orotidine 5'-phosphate + H(+) = UMP + CO2. It functions in the pathway pyrimidine metabolism; UMP biosynthesis via de novo pathway; UMP from orotate: step 2/2. The sequence is that of Orotidine 5'-phosphate decarboxylase (URA3) from Magnusiomyces magnusii (Yeast).